Reading from the N-terminus, the 661-residue chain is Acetyl-coenzyme A synthetase (661 aa).

Residues 199–202 (RGGK) and threonine 317 each bind CoA. ATP contacts are provided by residues 393–395 (GEP), 417–422 (DTFWQT), aspartate 508, and arginine 523. Serine 531 contributes to the CoA binding site. Residue arginine 534 participates in ATP binding. Arginine 596 provides a ligand contact to CoA.

Belongs to the ATP-dependent AMP-binding enzyme family.

It catalyses the reaction acetate + ATP + CoA = acetyl-CoA + AMP + diphosphate. This Coprinopsis cinerea (Inky cap fungus) protein is Acetyl-coenzyme A synthetase (ACS-1).